The chain runs to 116 residues: Non-specific lipid-transfer protein (116 aa).

Positions 1–25 (MAKMAMMVLCAGVTCMVVGAPYTEA) are cleaved as a signal peptide. 4 disulfide bridges follow: cysteine 28–cysteine 75, cysteine 38–cysteine 52, cysteine 53–cysteine 98, and cysteine 73–cysteine 112.

This sequence belongs to the plant LTP family.

Plant non-specific lipid-transfer proteins transfer phospholipids as well as galactolipids across membranes. May play a role in wax or cutin deposition in the cell walls of expanding epidermal cells and certain secretory tissues. The sequence is that of Non-specific lipid-transfer protein from Helianthus annuus (Common sunflower).